Here is a 215-residue protein sequence, read N- to C-terminus: Dual specificity phosphatase 29 (215 aa).

The Tyrosine-protein phosphatase domain occupies H53 to K201. H145 to R152 provides a ligand contact to substrate. C146 (phosphocysteine intermediate) is an active-site residue.

This sequence belongs to the protein-tyrosine phosphatase family. Non-receptor class dual specificity subfamily. Homodimer. Interacts with PRKAA2. In terms of tissue distribution, skeletal muscle, liver and adipose tissue.

Its subcellular location is the cytoplasm. It localises to the nucleus. It carries out the reaction O-phospho-L-tyrosyl-[protein] + H2O = L-tyrosyl-[protein] + phosphate. The enzyme catalyses O-phospho-L-seryl-[protein] + H2O = L-seryl-[protein] + phosphate. The catalysed reaction is O-phospho-L-threonyl-[protein] + H2O = L-threonyl-[protein] + phosphate. Its function is as follows. Dual specificity phosphatase able to dephosphorylate phosphotyrosine, phosphoserine and phosphothreonine residues within the same substrate, with a preference for phosphotyrosine as a substrate. Involved in the modulation of intracellular signaling cascades. In skeletal muscle regulates systemic glucose homeostasis by activating, AMPK, an energy sensor protein kinase. Affects MAP kinase signaling though modulation of the MAPK1/2 cascade in skeletal muscle promoting muscle cell differentiation, development and atrophy. The protein is Dual specificity phosphatase 29 of Mus musculus (Mouse).